Here is a 137-residue protein sequence, read N- to C-terminus: Holo-[acyl-carrier-protein] synthase (137 aa).

The Mg(2+) site is built by Asp-8 and Glu-57.

This sequence belongs to the P-Pant transferase superfamily. AcpS family. The cofactor is Mg(2+).

It is found in the cytoplasm. The catalysed reaction is apo-[ACP] + CoA = holo-[ACP] + adenosine 3',5'-bisphosphate + H(+). Transfers the 4'-phosphopantetheine moiety from coenzyme A to a Ser of acyl-carrier-protein. This is Holo-[acyl-carrier-protein] synthase from Cereibacter sphaeroides (strain ATCC 17025 / ATH 2.4.3) (Rhodobacter sphaeroides).